A 160-amino-acid chain; its full sequence is MSIIKKPDLTDPKLRAKLAKGMGHHYYGEPAWPNDILYMFPVVILGILACDVGLSILEPSVIGEPANPFATPLEILPEWYFFPTFNLLRVIPNKLVGVLSMASVPAGLITVPFIESVNKFQNPFRRPIATSVFLVGTIVAVWLGIGATMPLSKAITLGLF.

Transmembrane regions (helical) follow at residues 36 to 56 (ILYMFPVVILGILACDVGLSI), 95 to 115 (LVGVLSMASVPAGLITVPFIE), and 127 to 147 (PIATSVFLVGTIVAVWLGIGA).

Belongs to the cytochrome b family. PetD subfamily. In terms of assembly, the 4 large subunits of the cytochrome b6-f complex are cytochrome b6, subunit IV (17 kDa polypeptide, petD), cytochrome f and the Rieske protein, while the 4 small subunits are petG, petL, petM and petN. The complex functions as a dimer.

The protein localises to the plastid. Its subcellular location is the chloroplast thylakoid membrane. In terms of biological role, component of the cytochrome b6-f complex, which mediates electron transfer between photosystem II (PSII) and photosystem I (PSI), cyclic electron flow around PSI, and state transitions. The protein is Cytochrome b6-f complex subunit 4 of Gracilaria tenuistipitata var. liui (Red alga).